Reading from the N-terminus, the 288-residue chain is Phosphatidylserine decarboxylase proenzyme (288 aa).

Residues Asp-92, His-149, and Ser-254 each act as charge relay system; for autoendoproteolytic cleavage activity in the active site. Ser-254 functions as the Schiff-base intermediate with substrate; via pyruvic acid; for decarboxylase activity in the catalytic mechanism. The residue at position 254 (Ser-254) is a Pyruvic acid (Ser); by autocatalysis.

The protein belongs to the phosphatidylserine decarboxylase family. PSD-B subfamily. Prokaryotic type I sub-subfamily. In terms of assembly, heterodimer of a large membrane-associated beta subunit and a small pyruvoyl-containing alpha subunit. The cofactor is pyruvate. In terms of processing, is synthesized initially as an inactive proenzyme. Formation of the active enzyme involves a self-maturation process in which the active site pyruvoyl group is generated from an internal serine residue via an autocatalytic post-translational modification. Two non-identical subunits are generated from the proenzyme in this reaction, and the pyruvate is formed at the N-terminus of the alpha chain, which is derived from the carboxyl end of the proenzyme. The autoendoproteolytic cleavage occurs by a canonical serine protease mechanism, in which the side chain hydroxyl group of the serine supplies its oxygen atom to form the C-terminus of the beta chain, while the remainder of the serine residue undergoes an oxidative deamination to produce ammonia and the pyruvoyl prosthetic group on the alpha chain. During this reaction, the Ser that is part of the protease active site of the proenzyme becomes the pyruvoyl prosthetic group, which constitutes an essential element of the active site of the mature decarboxylase.

It localises to the cell membrane. The enzyme catalyses a 1,2-diacyl-sn-glycero-3-phospho-L-serine + H(+) = a 1,2-diacyl-sn-glycero-3-phosphoethanolamine + CO2. It participates in phospholipid metabolism; phosphatidylethanolamine biosynthesis; phosphatidylethanolamine from CDP-diacylglycerol: step 2/2. In terms of biological role, catalyzes the formation of phosphatidylethanolamine (PtdEtn) from phosphatidylserine (PtdSer). In Bordetella petrii (strain ATCC BAA-461 / DSM 12804 / CCUG 43448), this protein is Phosphatidylserine decarboxylase proenzyme.